Reading from the N-terminus, the 359-residue chain is Popy class I histocompatibility antigen, alpha chain E (359 aa).

The signal sequence occupies residues 1–18 (GTLLLLLSEALALTETWA). An alpha-1 region spans residues 19–108 (GSHSLKYFHT…LRGYYNQTEA (90 aa)). Topologically, residues 19-302 (GSHSLKYFHT…EPASQTTIPI (284 aa)) are extracellular. N-linked (GlcNAc...) asparagine glycosylation is present at Asn-104. Residues 109–200 (GSHTLQWMHG…EKGKETLLHL (92 aa)) form an alpha-2 region. 2 disulfide bridges follow: Cys-119/Cys-182 and Cys-221/Cys-277. An alpha-3 region spans residues 201–292 (DPPKTHVTHH…GLPEPLTLRW (92 aa)). Positions 203–291 (PKTHVTHHRI…EGLPEPLTLR (89 aa)) constitute an Ig-like C1-type domain. The connecting peptide stretch occupies residues 293-302 (EPASQTTIPI). Residues 303-326 (VGIFAGLVLLGAVVTGATVVAAVM) form a helical membrane-spanning segment. Over 327 to 359 (WRKKSSGGKGGSYSKAEWSDSAQGSESLTACKA) the chain is Cytoplasmic. The disordered stretch occupies residues 330-359 (KSSGGKGGSYSKAEWSDSAQGSESLTACKA). The segment covering 346 to 359 (DSAQGSESLTACKA) has biased composition (polar residues). Ser-351 carries the post-translational modification Phosphoserine.

The protein belongs to the MHC class I family. Heterodimer of an alpha chain and a beta chain (beta-2-microglobulin).

It localises to the membrane. Involved in the presentation of foreign antigens to the immune system. The chain is Popy class I histocompatibility antigen, alpha chain E (Popy-E) from Pongo pygmaeus (Bornean orangutan).